We begin with the raw amino-acid sequence, 155 residues long: Nucleoside diphosphate kinase, cytosolic (155 aa).

Lys16, Phe64, Arg92, Thr98, Arg109, and Asn119 together coordinate ATP. His122 functions as the Pros-phosphohistidine intermediate in the catalytic mechanism.

The protein belongs to the NDK family. Homohexamer. Mg(2+) serves as cofactor.

It is found in the cytoplasm. It catalyses the reaction a 2'-deoxyribonucleoside 5'-diphosphate + ATP = a 2'-deoxyribonucleoside 5'-triphosphate + ADP. The enzyme catalyses a ribonucleoside 5'-diphosphate + ATP = a ribonucleoside 5'-triphosphate + ADP. Its function is as follows. Major role in the synthesis of nucleoside triphosphates other than ATP. The protein is Nucleoside diphosphate kinase, cytosolic (ndkC-1) of Dictyostelium discoideum (Social amoeba).